Reading from the N-terminus, the 177-residue chain is Ribosome maturation factor RimP (177 aa).

Residues 153 to 171 (VEFNRKDTKNDNQTEHDNK) are compositionally biased toward basic and acidic residues. The tract at residues 153–177 (VEFNRKDTKNDNQTEHDNKTEEEEA) is disordered.

This sequence belongs to the RimP family.

It localises to the cytoplasm. Functionally, required for maturation of 30S ribosomal subunits. In Streptomyces coelicolor (strain ATCC BAA-471 / A3(2) / M145), this protein is Ribosome maturation factor RimP.